Reading from the N-terminus, the 249-residue chain is MFFSAALRARAAGLTAQWGRHVRNLHKTAMQNGAGGALFVHRDTPENNPDTPFDFTPENYKRIEAIVKNYPEGHKAAAVLPVLDLAQRQNGWLPISAMNKVAEVLQVPPMRVYEVATFYTMYNRKPVGKYHIQVCTTTPCMLRNSDSILEAIQKKLGIKVGETTPDKLFTLIEVECLGACVNAPMVQINDNYYEDLTAKDIEEIIDELKAGKIPKPGPRSGRFSCEPAGGLTSLTEPPKGPGFGVQAGL.

Residues 1–32 (MFFSAALRARAAGLTAQWGRHVRNLHKTAMQN) constitute a mitochondrion transit peptide. At K61 the chain carries N6-acetyllysine. Residues C135, C140, C176, and C180 each coordinate [2Fe-2S] cluster. Y193 carries the post-translational modification Phosphotyrosine; by SRC. A disordered region spans residues 213 to 249 (IPKPGPRSGRFSCEPAGGLTSLTEPPKGPGFGVQAGL).

It belongs to the complex I 24 kDa subunit family. Core subunit of respiratory chain NADH dehydrogenase (Complex I) which is composed of 45 different subunits. This is a component of the flavoprotein-sulfur (FP) fragment of the enzyme. The cofactor is [2Fe-2S] cluster.

The protein resides in the mitochondrion inner membrane. The catalysed reaction is a ubiquinone + NADH + 5 H(+)(in) = a ubiquinol + NAD(+) + 4 H(+)(out). Its function is as follows. Core subunit of the mitochondrial membrane respiratory chain NADH dehydrogenase (Complex I) which catalyzes electron transfer from NADH through the respiratory chain, using ubiquinone as an electron acceptor. Parts of the peripheral arm of the enzyme, where the electrons from NADH are accepted by flavin mononucleotide (FMN) and then passed along a chain of iron-sulfur clusters by electron tunnelling to the final acceptor ubiquinone. Contains one iron-sulfur cluster. In Gorilla gorilla gorilla (Western lowland gorilla), this protein is NADH dehydrogenase [ubiquinone] flavoprotein 2, mitochondrial.